We begin with the raw amino-acid sequence, 388 residues long: Flavin-dependent monooxygenase (388 aa).

Residues 12–15 (VGVA), 34–36 (EKS), 44–47 (QALD), R105, Y267, D289, and 296–302 (PLSGQGN) contribute to the FAD site.

The protein belongs to the aromatic-ring hydroxylase family. It depends on FAD as a cofactor.

The enzyme catalyses a tetracycline + NADPH + O2 + H(+) = a (1S,10aS)-3-(CONH2)-1-(Me2N)-3,3a,4,6-(HO)4-2,5-dioxo-1H,10aH,11H,11aH-cyclopenta[b]anthracene + CO + NADP(+) + H2O. The catalysed reaction is 7-chlorotetracycline + NADPH + O2 + H(+) = (1S,10S,10aS)-3-(CONH2)-9-Cl-1-(Me2N)-3,3a,4,10-(HO)4-10-Me-2,5-dioxo-1H,10aH,11H,11aH-cyclopenta[b]anthracen-6-olate + CO + NADP(+) + H2O. With respect to regulation, inhibited by anhydrotetracycline. Its function is as follows. An FAD-requiring monooxygenase active on tetracycline antibiotic and some of its derivatives, which leads to their inactivation. Expression in E.coli confers high resistance to tetracycline and oxytetracycline, does not confer resistance to minocycline or tigecycline. Degrades tetracycline and oxytetracycline; the reaction requires NADPH. Degrades and confers resistance to chlortetracycline. This chain is Flavin-dependent monooxygenase (tet(50)), found in Unknown prokaryotic organism.